We begin with the raw amino-acid sequence, 155 residues long: Cardio acceleratory peptide 2b (155 aa).

An N-terminal signal peptide occupies residues 1–26 (MKAIFSLYNIVSAILLLVLLAEFSTA). The propeptide occupies 27–33 (ELNHDKN). A Valine amide modification is found at Val47. The propeptide occupies 50-85 (SDPSLANSLRDASDAAVFDGLYGDASQEDYNEADYQ). At Val96 the chain carries Valine amide. A propeptide spanning residues 99–117 (SDAELRKFAHLLALQQVLD) is cleaved from the precursor. Leucine amide is present on Leu134. Positions 138 to 155 (SVDAKAFSDASKGQQEFN) are excised as a propeptide.

It belongs to the pyrokinin family.

It localises to the secreted. Functionally, CAP-1 and CAP-2, but not CAP-3 are ligands for the Capa receptor. CAP-1 and CAP-2 are probably components of the signal transduction pathway that leads to Malpighian tubule fluid secretion via the second messenger nitric oxide. This chain is Cardio acceleratory peptide 2b, found in Drosophila pseudoobscura pseudoobscura (Fruit fly).